The sequence spans 325 residues: Coiled-coil domain-containing protein 130 homolog (325 aa).

Residues 156-262 are a coiled coil; that stretch reads LKLENKKLDI…KLKRELIKNE (107 aa).

This sequence belongs to the CWC16 family.

This is Coiled-coil domain-containing protein 130 homolog from Dictyostelium discoideum (Social amoeba).